A 558-amino-acid polypeptide reads, in one-letter code: Formate--tetrahydrofolate ligase (558 aa).

Residue 65-72 (TPAGEGKT) coordinates ATP.

Belongs to the formate--tetrahydrofolate ligase family.

The catalysed reaction is (6S)-5,6,7,8-tetrahydrofolate + formate + ATP = (6R)-10-formyltetrahydrofolate + ADP + phosphate. The protein operates within one-carbon metabolism; tetrahydrofolate interconversion. The polypeptide is Formate--tetrahydrofolate ligase (Methylobacterium nodulans (strain LMG 21967 / CNCM I-2342 / ORS 2060)).